Reading from the N-terminus, the 144-residue chain is Large ribosomal subunit protein uL13 (144 aa).

The protein belongs to the universal ribosomal protein uL13 family. Part of the 50S ribosomal subunit.

This protein is one of the early assembly proteins of the 50S ribosomal subunit, although it is not seen to bind rRNA by itself. It is important during the early stages of 50S assembly. This is Large ribosomal subunit protein uL13 from Clostridium kluyveri (strain NBRC 12016).